Here is a 262-residue protein sequence, read N- to C-terminus: Type II restriction enzyme HinfI (262 aa).

The enzyme catalyses Endonucleolytic cleavage of DNA to give specific double-stranded fragments with terminal 5'-phosphates.. Its function is as follows. A P subtype restriction enzyme that recognizes the double-stranded sequence 5'-GANTC-3' and cleaves after G-1. The protein is Type II restriction enzyme HinfI (hinfIR) of Haemophilus influenzae.